The following is a 304-amino-acid chain: Murein tetrapeptide carboxypeptidase (304 aa).

Ser106 (nucleophile) is an active-site residue. Active-site charge relay system residues include Glu200 and His270.

Belongs to the peptidase S66 family.

It localises to the cytoplasm. The catalysed reaction is N-acetyl-D-glucosaminyl-N-acetylmuramoyl-L-alanyl-meso-2,6-diaminoheptanedioyl-D-alanine + H2O = N-acetyl-D-glucosaminyl-N-acetylmuramoyl-L-alanyl-meso-2,6-diaminoheptanedioate + D-alanine. Its pathway is cell wall biogenesis; peptidoglycan recycling. Inhibited by beta-lactams containing a D-amino acid side chain. Functionally, releases the terminal D-alanine residue from the cytoplasmic tetrapeptide recycling product L-Ala-gamma-D-Glu-meso-Dap-D-Ala. To a lesser extent, can also cleave D-Ala from murein derivatives containing the tetrapeptide, i.e. MurNAc-tetrapeptide, UDP-MurNAc-tetrapeptide, GlcNAc-MurNAc-tetrapeptide, and GlcNAc-anhMurNAc-tetrapeptide. Does not act on murein sacculi or cross-linked muropeptides. The tripeptides produced by the LcdA reaction can then be reused as peptidoglycan building blocks; LcdA is thereby involved in murein recycling. Is also essential for viability during stationary phase. The chain is Murein tetrapeptide carboxypeptidase (ldcA) from Escherichia coli (strain K12).